The following is a 344-amino-acid chain: Dihydroorotate dehydrogenase (quinone) (344 aa).

Residues 65-69 (AGLDK) and threonine 89 contribute to the FMN site. Residue lysine 69 participates in substrate binding. 114–118 (NRMGF) is a binding site for substrate. Positions 145 and 178 each coordinate FMN. Asparagine 178 is a binding site for substrate. Serine 181 (nucleophile) is an active-site residue. Asparagine 183 provides a ligand contact to substrate. FMN-binding residues include lysine 223 and threonine 251. 252–253 (NT) lines the substrate pocket. FMN contacts are provided by residues glycine 274, glycine 303, and 324–325 (YT).

This sequence belongs to the dihydroorotate dehydrogenase family. Type 2 subfamily. Monomer. Requires FMN as cofactor.

It is found in the cell membrane. It carries out the reaction (S)-dihydroorotate + a quinone = orotate + a quinol. It participates in pyrimidine metabolism; UMP biosynthesis via de novo pathway; orotate from (S)-dihydroorotate (quinone route): step 1/1. Its function is as follows. Catalyzes the conversion of dihydroorotate to orotate with quinone as electron acceptor. This chain is Dihydroorotate dehydrogenase (quinone), found in Ralstonia nicotianae (strain ATCC BAA-1114 / GMI1000) (Ralstonia solanacearum).